Reading from the N-terminus, the 186-residue chain is ATP synthase subunit delta (186 aa).

The protein belongs to the ATPase delta chain family. F-type ATPases have 2 components, F(1) - the catalytic core - and F(0) - the membrane proton channel. F(1) has five subunits: alpha(3), beta(3), gamma(1), delta(1), epsilon(1). F(0) has three main subunits: a(1), b(2) and c(10-14). The alpha and beta chains form an alternating ring which encloses part of the gamma chain. F(1) is attached to F(0) by a central stalk formed by the gamma and epsilon chains, while a peripheral stalk is formed by the delta and b chains.

The protein localises to the cell inner membrane. F(1)F(0) ATP synthase produces ATP from ADP in the presence of a proton or sodium gradient. F-type ATPases consist of two structural domains, F(1) containing the extramembraneous catalytic core and F(0) containing the membrane proton channel, linked together by a central stalk and a peripheral stalk. During catalysis, ATP synthesis in the catalytic domain of F(1) is coupled via a rotary mechanism of the central stalk subunits to proton translocation. Its function is as follows. This protein is part of the stalk that links CF(0) to CF(1). It either transmits conformational changes from CF(0) to CF(1) or is implicated in proton conduction. This Brucella canis (strain ATCC 23365 / NCTC 10854 / RM-666) protein is ATP synthase subunit delta.